The chain runs to 116 residues: Nucleoid-associated protein P9215_00191 (116 aa).

This sequence belongs to the YbaB/EbfC family. Homodimer.

The protein localises to the cytoplasm. It is found in the nucleoid. Its function is as follows. Binds to DNA and alters its conformation. May be involved in regulation of gene expression, nucleoid organization and DNA protection. The sequence is that of Nucleoid-associated protein P9215_00191 from Prochlorococcus marinus (strain MIT 9215).